Here is a 335-residue protein sequence, read N- to C-terminus: Ferrochelatase (335 aa).

The Fe cation site is built by His-192 and Glu-291.

This sequence belongs to the ferrochelatase family.

The protein localises to the cytoplasm. It carries out the reaction heme b + 2 H(+) = protoporphyrin IX + Fe(2+). It functions in the pathway porphyrin-containing compound metabolism; protoheme biosynthesis; protoheme from protoporphyrin-IX: step 1/1. Functionally, catalyzes the ferrous insertion into protoporphyrin IX. This is Ferrochelatase from Bdellovibrio bacteriovorus (strain ATCC 15356 / DSM 50701 / NCIMB 9529 / HD100).